The primary structure comprises 551 residues: Probable terpene synthase 8 (551 aa).

Asp307, Asp311, and Glu457 together coordinate Mg(2+). Positions 307–311 (DDTYD) match the DDXXD motif motif.

It belongs to the terpene synthase family. Mg(2+) is required as a cofactor.

In terms of biological role, probable sesquiterpene synthase. The protein is Probable terpene synthase 8 (TPS8) of Ricinus communis (Castor bean).